The following is a 398-amino-acid chain: Energy-coupling factor transporter ATP-binding protein EcfA2 (398 aa).

Residues Ile5–Lys240 enclose the ABC transporter domain. Gly38–Ser45 provides a ligand contact to ATP.

The protein belongs to the ABC transporter superfamily. Energy-coupling factor EcfA family. As to quaternary structure, forms a stable energy-coupling factor (ECF) transporter complex composed of 2 membrane-embedded substrate-binding proteins (S component), 2 ATP-binding proteins (A component) and 2 transmembrane proteins (T component).

It localises to the cell membrane. ATP-binding (A) component of a common energy-coupling factor (ECF) ABC-transporter complex. Unlike classic ABC transporters this ECF transporter provides the energy necessary to transport a number of different substrates. The protein is Energy-coupling factor transporter ATP-binding protein EcfA2 of Methanospirillum hungatei JF-1 (strain ATCC 27890 / DSM 864 / NBRC 100397 / JF-1).